The chain runs to 660 residues: tRNA 5-methylaminomethyl-2-thiouridine biosynthesis bifunctional protein MnmC (660 aa).

Residues 1–242 (MTDRIVPATL…KRAMLVGEFA (242 aa)) are tRNA (mnm(5)s(2)U34)-methyltransferase. The FAD-dependent cmnm(5)s(2)U34 oxidoreductase stretch occupies residues 266–660 (IGAGLAGCAV…VRALRHGRVA (395 aa)).

The protein in the N-terminal section; belongs to the methyltransferase superfamily. tRNA (mnm(5)s(2)U34)-methyltransferase family. In the C-terminal section; belongs to the DAO family. FAD is required as a cofactor.

Its subcellular location is the cytoplasm. The catalysed reaction is 5-aminomethyl-2-thiouridine(34) in tRNA + S-adenosyl-L-methionine = 5-methylaminomethyl-2-thiouridine(34) in tRNA + S-adenosyl-L-homocysteine + H(+). In terms of biological role, catalyzes the last two steps in the biosynthesis of 5-methylaminomethyl-2-thiouridine (mnm(5)s(2)U) at the wobble position (U34) in tRNA. Catalyzes the FAD-dependent demodification of cmnm(5)s(2)U34 to nm(5)s(2)U34, followed by the transfer of a methyl group from S-adenosyl-L-methionine to nm(5)s(2)U34, to form mnm(5)s(2)U34. The chain is tRNA 5-methylaminomethyl-2-thiouridine biosynthesis bifunctional protein MnmC from Burkholderia mallei (strain NCTC 10247).